Consider the following 188-residue polypeptide: Ribose 1,5-bisphosphate phosphokinase PhnN (188 aa).

Belongs to the ribose 1,5-bisphosphokinase family.

It catalyses the reaction alpha-D-ribose 1,5-bisphosphate + ATP = 5-phospho-alpha-D-ribose 1-diphosphate + ADP. The protein operates within metabolic intermediate biosynthesis; 5-phospho-alpha-D-ribose 1-diphosphate biosynthesis; 5-phospho-alpha-D-ribose 1-diphosphate from D-ribose 5-phosphate (route II): step 3/3. Its function is as follows. Catalyzes the phosphorylation of ribose 1,5-bisphosphate to 5-phospho-D-ribosyl alpha-1-diphosphate (PRPP). The chain is Ribose 1,5-bisphosphate phosphokinase PhnN from Dickeya zeae (strain Ech586) (Dickeya dadantii (strain Ech586)).